A 168-amino-acid chain; its full sequence is Photosystem I assembly protein Ycf3 (168 aa).

3 TPR repeats span residues 35–68, 72–105, and 120–153; these read AFTYYRDGMSAQSEGNYAEALQNYYEAMRLEIDP, SYILYNIGLIHTSNGEHTKALEYYFRALERNPFL, and GEQAIRQGDSEIAEAWFDQAAEYWKQAISLTPGN.

Belongs to the Ycf3 family.

It is found in the plastid. The protein resides in the chloroplast thylakoid membrane. Essential for the assembly of the photosystem I (PSI) complex. May act as a chaperone-like factor to guide the assembly of the PSI subunits. This Coffea arabica (Arabian coffee) protein is Photosystem I assembly protein Ycf3.